The following is a 228-amino-acid chain: Phosphoribosylformylglycinamidine synthase subunit PurQ (228 aa).

The region spanning 2 to 228 is the Glutamine amidotransferase type-1 domain; the sequence is TVVVVQFGGS…DGKGILQAFG (227 aa). The Nucleophile role is filled by cysteine 88. Catalysis depends on residues histidine 205 and glutamate 207.

As to quaternary structure, part of the FGAM synthase complex composed of 1 PurL, 1 PurQ and 2 PurS subunits.

The protein resides in the cytoplasm. The enzyme catalyses N(2)-formyl-N(1)-(5-phospho-beta-D-ribosyl)glycinamide + L-glutamine + ATP + H2O = 2-formamido-N(1)-(5-O-phospho-beta-D-ribosyl)acetamidine + L-glutamate + ADP + phosphate + H(+). The catalysed reaction is L-glutamine + H2O = L-glutamate + NH4(+). Its pathway is purine metabolism; IMP biosynthesis via de novo pathway; 5-amino-1-(5-phospho-D-ribosyl)imidazole from N(2)-formyl-N(1)-(5-phospho-D-ribosyl)glycinamide: step 1/2. Functionally, part of the phosphoribosylformylglycinamidine synthase complex involved in the purines biosynthetic pathway. Catalyzes the ATP-dependent conversion of formylglycinamide ribonucleotide (FGAR) and glutamine to yield formylglycinamidine ribonucleotide (FGAM) and glutamate. The FGAM synthase complex is composed of three subunits. PurQ produces an ammonia molecule by converting glutamine to glutamate. PurL transfers the ammonia molecule to FGAR to form FGAM in an ATP-dependent manner. PurS interacts with PurQ and PurL and is thought to assist in the transfer of the ammonia molecule from PurQ to PurL. The polypeptide is Phosphoribosylformylglycinamidine synthase subunit PurQ (Haloquadratum walsbyi (strain DSM 16790 / HBSQ001)).